Consider the following 215-residue polypeptide: MANRGATRPNGPNTGNKICQFKLVLLGESAVGKSSLVLRFVKGQFHEFQESTIGAAFLTQTVCLDDTTVKFEIWDTAGQERYHSLAPMYYRGAQAAIVVYDITNEESFARAKNWVKELQRQASPNIVIALSGNKADLANKRAVDFQEAQSYADDNSLLFMETSAKTSMNVNEIFMAIAKKLPKNEPQNPGANSARGRGVDLTEPTQPTRSQCCSN.

GTP is bound by residues Ser29, Ala30, Gly32, Lys33, Ser34, Ser35, His46, Glu47, Thr52, and Gly78. Ser34 is a binding site for Mg(2+). Short sequence motifs (switch) lie at residues 44-56 and 77-93; these read QFHEFQESTIGAA and AGQERYHSLAPMYYRGA. Thr52 lines the Mg(2+) pocket. Ser84 carries the phosphoserine modification. Residues Asn133, Lys134, Asp136, Ala164, and Lys165 each coordinate GTP. Residues 181–215 are disordered; the sequence is LPKNEPQNPGANSARGRGVDLTEPTQPTRSQCCSN. Residues 203–215 are compositionally biased toward polar residues; it reads EPTQPTRSQCCSN. 2 S-geranylgeranyl cysteine lipidation sites follow: Cys212 and Cys213.

It belongs to the small GTPase superfamily. Rab family. As to quaternary structure, interacts with GDI1; this promotes dissociation from membranes; phosphorylation at Ser-84 disrupts this interaction. Interacts with GDI2; phosphorylation at Ser-84 disrupts the interaction. Binds EEA1. Interacts with ALS2CL, SUN2, ZFYVE20 and RUFY1. Interacts with RIN1 and GAPVD1, which regulate its pathway, probably by acting as a GEF. Interacts with SGSM1 and SGSM3. Interacts with PIK3CB. Interacts with RABEP1 and RINL. Interacts with OCRL and INPP5F. May be a component of a complex composed of RAB5A, DYN2 and PIK3C3. Does not interact with the BLOC-3 complex (heterodimer of HPS1 and HPS4). Interacts with CLN5. Interacts with APPL2. Interacts with F8A1/F8A2/F8A3. Found in a complex with F8A1/F8A2/F8A3, HTT and RAB5A; mediates the recruitment of HTT by RAB5A onto early endosomes. Interacts with ATP9A. Interacts with PPP1R21; mediates the recruitment of FERRY complex by RAB5A onto early endosomes. Requires Mg(2+) as cofactor. Phosphorylation of Ser-84 in the switch II region by LRRK2 prevents the association of RAB regulatory proteins, including RAB GDP dissociation inhibitors GDI1 and GDI2.

It is found in the cell membrane. The protein localises to the early endosome membrane. Its subcellular location is the melanosome. It localises to the cytoplasmic vesicle. The protein resides in the cell projection. It is found in the ruffle. The protein localises to the cytoplasm. Its subcellular location is the cytosol. It localises to the membrane. The protein resides in the phagosome membrane. It is found in the endosome membrane. It carries out the reaction GTP + H2O = GDP + phosphate + H(+). Its activity is regulated as follows. Regulated by guanine nucleotide exchange factors (GEFs) including RINL, which promote the exchange of bound GDP for free GTP. Regulated by GTPase activating proteins (GAPs) which increase the GTP hydrolysis activity. Inhibited by GDP dissociation inhibitors (GDIs). The small GTPases Rab are key regulators of intracellular membrane trafficking, from the formation of transport vesicles to their fusion with membranes. Rabs cycle between an inactive GDP-bound form and an active GTP-bound form that is able to recruit to membranes different sets of downstream effectors directly responsible for vesicle formation, movement, tethering and fusion. RAB5A is required for the fusion of plasma membranes and early endosomes. Contributes to the regulation of filopodia extension. Required for the exosomal release of SDCBP, CD63, PDCD6IP and syndecan. Regulates maturation of apoptotic cell-containing phagosomes, probably downstream of DYN2 and PIK3C3. In Canis lupus familiaris (Dog), this protein is Ras-related protein Rab-5A (RAB5A).